A 146-amino-acid chain; its full sequence is Transcriptional regulator MraZ (146 aa).

2 consecutive SpoVT-AbrB domains span residues 9-55 (TSAL…PRPV) and 81-124 (AMDV…DAQR).

This sequence belongs to the MraZ family. As to quaternary structure, forms oligomers.

The protein localises to the cytoplasm. Its subcellular location is the nucleoid. The protein is Transcriptional regulator MraZ of Leptothrix cholodnii (strain ATCC 51168 / LMG 8142 / SP-6) (Leptothrix discophora (strain SP-6)).